The sequence spans 486 residues: Protein DETOXIFICATION 27 (486 aa).

Positions 1–25 (MRGGDGEEGSESRVALLKSPHTAEE) are disordered. Transmembrane regions (helical) follow at residues 41–61 (LWQI…MLVI), 74–94 (LAAI…LLLG), 124–144 (IVLF…TPVL), 153–173 (IAEL…AFTL), 189–209 (VTAY…WLFV), 216–236 (VVGT…ILLV), 269–289 (GVML…TGNL), 299–319 (LSIC…FFAG), 349–369 (IIGL…AWIF), 384–404 (LLLA…GVAV), 407–427 (GWQS…GVPL), and 439–461 (VMGI…LSFI).

The protein belongs to the multi antimicrobial extrusion (MATE) (TC 2.A.66.1) family.

The protein resides in the membrane. This Arabidopsis thaliana (Mouse-ear cress) protein is Protein DETOXIFICATION 27.